The primary structure comprises 402 residues: Galactoside 2-alpha-L-fucosyltransferase (402 aa).

The Cytoplasmic portion of the chain corresponds to 1–6; sequence MRYNSN. A helical; Signal-anchor for type II membrane protein transmembrane segment spans residues 7–27; sequence YLMYFCLVLGIFANIYVIIKI. The Lumenal portion of the chain corresponds to 28–402; the sequence is TLGSSHILEY…TDLNGKISKY (375 aa). Asn-119, Asn-175, and Asn-301 each carry an N-linked (GlcNAc...) asparagine glycan.

It belongs to the glycosyltransferase 11 family. May form oligomers. Post-translationally, N-glycosylated. Expression is restricted to pharyngeal neurons and gland cells.

Its subcellular location is the golgi apparatus. The protein localises to the golgi stack membrane. The protein operates within protein modification; protein glycosylation. In terms of biological role, selectively catalyzes the addition of fucose in alpha 1-2 linkage to Gal-beta-(1-&gt;3)-GalNAc-alpha-R, Gal-beta-(1-&gt;3)-(GlcNAc-beta-(1-&gt;6))-GalNAc-alpha-R and Gal-beta-(1-&gt;3)-GalNAc acceptors but not Gal-beta-(1-&gt;3)-GlcNAc-beta-(1-&gt;3)-Gal-beta-(1-&gt;4)-Glc in vitro. This chain is Galactoside 2-alpha-L-fucosyltransferase, found in Caenorhabditis elegans.